We begin with the raw amino-acid sequence, 421 residues long: Imidazolonepropionase (421 aa).

The Fe(3+) site is built by His-81 and His-83. Positions 81 and 83 each coordinate Zn(2+). Positions 90, 153, and 186 each coordinate 4-imidazolone-5-propanoate. Tyr-153 is an N-formimidoyl-L-glutamate binding site. His-251 contacts Fe(3+). His-251 provides a ligand contact to Zn(2+). Position 254 (Glu-254) interacts with 4-imidazolone-5-propanoate. Asp-326 is a Fe(3+) binding site. Asp-326 contacts Zn(2+). Asn-328 and Gly-330 together coordinate N-formimidoyl-L-glutamate. Ser-331 provides a ligand contact to 4-imidazolone-5-propanoate.

It belongs to the metallo-dependent hydrolases superfamily. HutI family. Zn(2+) is required as a cofactor. Requires Fe(3+) as cofactor.

It localises to the cytoplasm. The enzyme catalyses 4-imidazolone-5-propanoate + H2O = N-formimidoyl-L-glutamate. It participates in amino-acid degradation; L-histidine degradation into L-glutamate; N-formimidoyl-L-glutamate from L-histidine: step 3/3. Catalyzes the hydrolytic cleavage of the carbon-nitrogen bond in imidazolone-5-propanoate to yield N-formimidoyl-L-glutamate. It is the third step in the universal histidine degradation pathway. This Streptococcus sanguinis (strain SK36) protein is Imidazolonepropionase.